A 301-amino-acid polypeptide reads, in one-letter code: Probable DNA-directed RNA polymerase III subunit rpc6 (301 aa).

The protein belongs to the eukaryotic RPC34/RPC39 RNA polymerase subunit family. As to quaternary structure, component of the RNA polymerase III (Pol III) complex consisting of 17 subunits. Interacts with TFIIB.

Its subcellular location is the nucleus. Its function is as follows. DNA-dependent RNA polymerase catalyzes the transcription of DNA into RNA using the four ribonucleoside triphosphates as substrates. Specific peripheric component of RNA polymerase III which synthesizes small RNAs, such as 5S rRNA and tRNAs. The protein is Probable DNA-directed RNA polymerase III subunit rpc6 (rpc6) of Schizosaccharomyces pombe (strain 972 / ATCC 24843) (Fission yeast).